The sequence spans 700 residues: Dipeptidyl aminopeptidase 1 (700 aa).

The first 27 residues, 1–27 (MAKRIFSVSFLLVLLNVLHICIKFSVA), serve as a signal peptide directing secretion. N-linked (GlcNAc...) asparagine glycans are attached at residues asparagine 52, asparagine 144, asparagine 265, asparagine 337, and asparagine 373. The propeptide occupies 210–369 (DNVNEIKHLD…SPKRELEINE (160 aa)). Cystine bridges form between cysteine 395-cysteine 446 and cysteine 439-cysteine 478. The active site involves cysteine 398. Threonine 416 carries the post-translational modification Sulfothreonine. Phenylalanine 450 and tyrosine 452 together coordinate chloride. Asparagine 481, asparagine 490, and asparagine 507 each carry an N-linked (GlcNAc...) asparagine glycan. Tyrosine 549 serves as a coordination point for chloride. N-linked (GlcNAc...) asparagine glycosylation is present at asparagine 615. Active-site residues include histidine 624 and asparagine 648. Residue asparagine 667 is glycosylated (N-linked (GlcNAc...) asparagine).

The protein belongs to the peptidase C1 family. In terms of assembly, monomer. It depends on chloride as a cofactor.

The protein resides in the vacuole lumen. It localises to the parasitophorous vacuole lumen. The catalysed reaction is Release of an N-terminal dipeptide, Xaa-Yaa-|-Zaa-, except when Xaa is Arg or Lys, or Yaa or Zaa is Pro.. In terms of biological role, thiol protease that cleaves dipeptides from the N-terminus of protein substrates. Active against a broad range of dipeptide substrates composed of both polar and hydrophobic amino acids. Proline cannot occupy the P1 position and arginine or lysine cannot occupy the P2 position of the substrate. Involved in host hemoglobin degradation by generating dipeptides from hemoglobin-derived oligopeptides. This is Dipeptidyl aminopeptidase 1 from Plasmodium falciparum (isolate 3D7).